The primary structure comprises 594 residues: ATP-dependent zinc metalloprotease FtsH 1 (594 aa).

Over 1-2 the chain is Cytoplasmic; the sequence is MR. The chain crosses the membrane as a helical span at residues 3-23; the sequence is WWAGAALLLAALLFGRPAAAM. At 24-92 the chain is on the extracellular side; it reads EAQPVAYSEF…RVEFVRPADP (69 aa). Residues 93–113 traverse the membrane as a helical segment; that stretch reads IAFRTLLRFIPPLLILGAILW. Residues 114–594 are Cytoplasmic-facing; that stretch reads FTRRTAGGSG…ANSRGDEGNQ (481 aa). 186 to 193 contacts ATP; the sequence is GPPGTGKT. His408 serves as a coordination point for Zn(2+). Glu409 is a catalytic residue. Zn(2+) is bound by residues His412 and Asp485.

It in the central section; belongs to the AAA ATPase family. In the C-terminal section; belongs to the peptidase M41 family. Homohexamer. Zn(2+) serves as cofactor.

It localises to the cell membrane. In terms of biological role, acts as a processive, ATP-dependent zinc metallopeptidase for both cytoplasmic and membrane proteins. Plays a role in the quality control of integral membrane proteins. The chain is ATP-dependent zinc metalloprotease FtsH 1 from Symbiobacterium thermophilum (strain DSM 24528 / JCM 14929 / IAM 14863 / T).